The primary structure comprises 662 residues: Protein Aster-C (662 aa).

Residues 1-34 (MEGAPTVRQVMNEGDSSLATELQEDVEENPSPTV) form a disordered region. The GRAM domain maps to 69–136 (EEYRRQFTHL…KNITFMTKEK (68 aa)). 2 disordered regions span residues 212 to 237 (SIED…EKLS) and 250 to 284 (VSET…LPTL). Residues 265 to 276 (LGKEESQNEKQT) are compositionally biased toward basic and acidic residues. A VASt domain is found at 326-497 (HGRLFINRIF…DLLIEESILN (172 aa)). The helical transmembrane segment at 557-577 (LIVVMSIFVLLLVLLNVTLFL) threads the bilayer.

It localises to the endoplasmic reticulum membrane. The protein resides in the cell membrane. Functionally, cholesterol transporter that mediates non-vesicular transport of cholesterol from the plasma membrane (PM) to the endoplasmic reticulum (ER). Contains unique domains for binding cholesterol and the PM, thereby serving as a molecular bridge for the transfer of cholesterol from the PM to the ER. Plays a crucial role in cholesterol homeostasis and has the unique ability to localize to the PM based on the level of membrane cholesterol. In lipid-poor conditions localizes to the ER membrane and in response to excess cholesterol in the PM is recruited to the endoplasmic reticulum-plasma membrane contact sites (EPCS) which is mediated by the GRAM domain. At the EPCS, the sterol-binding VASt/ASTER domain binds to the cholesterol in the PM and facilitates its transfer from the PM to ER. This Pongo abelii (Sumatran orangutan) protein is Protein Aster-C (GRAMD1C).